The chain runs to 321 residues: tRNA(Ile)-lysidine synthase (321 aa).

30–35 (SGGSDS) contributes to the ATP binding site.

Belongs to the tRNA(Ile)-lysidine synthase family.

It is found in the cytoplasm. It carries out the reaction cytidine(34) in tRNA(Ile2) + L-lysine + ATP = lysidine(34) in tRNA(Ile2) + AMP + diphosphate + H(+). Functionally, ligates lysine onto the cytidine present at position 34 of the AUA codon-specific tRNA(Ile) that contains the anticodon CAU, in an ATP-dependent manner. Cytidine is converted to lysidine, thus changing the amino acid specificity of the tRNA from methionine to isoleucine. This chain is tRNA(Ile)-lysidine synthase, found in Chlamydia trachomatis serovar L2 (strain ATCC VR-902B / DSM 19102 / 434/Bu).